Reading from the N-terminus, the 326-residue chain is MQSFAKITAQGTYVPEKVMDNNDFEKIVETSDEWIQQRTGIIERRIADENEYTSDLSYKAVLDLQEKYQVDLTDVDMIINTTLTPDYKTPSVASYVQAQLGLKNAGAIDINAACAGFTYGLNLANGLITSGQNKKILVIGSETLSKITDYNDRSTCILFGDGAGAFLVEYDKEEMSFIASNAGSDGLKGHNLYCTELSEEMFSDDLENHGYIVQNGRGVYKWAVGNVPNIIHEVLNQSNYSIEDLNWFVPHSANARMIESICEKANIETDKALKSLKYYGNTSSATIPLSIDLAIKEGKIKKDDLILLVGFGGGLAYASTLIRWTI.

Residues Cys-114 and His-251 contribute to the active site. An ACP-binding region spans residues 252 to 256 (SANAR). The active site involves Asn-281.

Belongs to the thiolase-like superfamily. FabH family. As to quaternary structure, homodimer.

It is found in the cytoplasm. It carries out the reaction malonyl-[ACP] + acetyl-CoA + H(+) = 3-oxobutanoyl-[ACP] + CO2 + CoA. It participates in lipid metabolism; fatty acid biosynthesis. Functionally, catalyzes the condensation reaction of fatty acid synthesis by the addition to an acyl acceptor of two carbons from malonyl-ACP. Catalyzes the first condensation reaction which initiates fatty acid synthesis and may therefore play a role in governing the total rate of fatty acid production. Possesses both acetoacetyl-ACP synthase and acetyl transacylase activities. Its substrate specificity determines the biosynthesis of branched-chain and/or straight-chain of fatty acids. This chain is Beta-ketoacyl-[acyl-carrier-protein] synthase III 2, found in Staphylococcus epidermidis (strain ATCC 12228 / FDA PCI 1200).